Reading from the N-terminus, the 366-residue chain is UDP-N-acetylglucosamine--N-acetylmuramyl-(pentapeptide) pyrophosphoryl-undecaprenol N-acetylglucosamine transferase (366 aa).

UDP-N-acetyl-alpha-D-glucosamine is bound by residues 14 to 16, asparagine 125, arginine 168, serine 196, and glutamine 297; that span reads TGG.

It belongs to the glycosyltransferase 28 family. MurG subfamily.

It localises to the cell inner membrane. It catalyses the reaction di-trans,octa-cis-undecaprenyl diphospho-N-acetyl-alpha-D-muramoyl-L-alanyl-D-glutamyl-meso-2,6-diaminopimeloyl-D-alanyl-D-alanine + UDP-N-acetyl-alpha-D-glucosamine = di-trans,octa-cis-undecaprenyl diphospho-[N-acetyl-alpha-D-glucosaminyl-(1-&gt;4)]-N-acetyl-alpha-D-muramoyl-L-alanyl-D-glutamyl-meso-2,6-diaminopimeloyl-D-alanyl-D-alanine + UDP + H(+). Its pathway is cell wall biogenesis; peptidoglycan biosynthesis. In terms of biological role, cell wall formation. Catalyzes the transfer of a GlcNAc subunit on undecaprenyl-pyrophosphoryl-MurNAc-pentapeptide (lipid intermediate I) to form undecaprenyl-pyrophosphoryl-MurNAc-(pentapeptide)GlcNAc (lipid intermediate II). The polypeptide is UDP-N-acetylglucosamine--N-acetylmuramyl-(pentapeptide) pyrophosphoryl-undecaprenol N-acetylglucosamine transferase (Bradyrhizobium diazoefficiens (strain JCM 10833 / BCRC 13528 / IAM 13628 / NBRC 14792 / USDA 110)).